Reading from the N-terminus, the 627-residue chain is UvrABC system protein C (627 aa).

The GIY-YIG domain occupies 26-105; the sequence is PSPGVYQFRN…IKELKPRYNV (80 aa). A UVR domain is found at 219–254; it reads STMIRSLTSAMQLFARELKFERAAEIKMQLESLKRY.

It belongs to the UvrC family. As to quaternary structure, interacts with UvrB in an incision complex.

It localises to the cytoplasm. Functionally, the UvrABC repair system catalyzes the recognition and processing of DNA lesions. UvrC both incises the 5' and 3' sides of the lesion. The N-terminal half is responsible for the 3' incision and the C-terminal half is responsible for the 5' incision. This Pelodictyon phaeoclathratiforme (strain DSM 5477 / BU-1) protein is UvrABC system protein C.